We begin with the raw amino-acid sequence, 689 residues long: Methionine--tRNA ligase (689 aa).

Positions 15-25 (PYANGPIHLGH) match the 'HIGH' region motif. C146, C149, C159, and C162 together coordinate Zn(2+). The short motif at 332-336 (KMSKS) is the 'KMSKS' region element. K335 contacts ATP. One can recognise a tRNA-binding domain in the interval 588–689 (DFAKIDLRIA…EGAQPGMRVK (102 aa)).

It belongs to the class-I aminoacyl-tRNA synthetase family. MetG type 1 subfamily. Homodimer. Zn(2+) serves as cofactor.

The protein resides in the cytoplasm. It carries out the reaction tRNA(Met) + L-methionine + ATP = L-methionyl-tRNA(Met) + AMP + diphosphate. Its function is as follows. Is required not only for elongation of protein synthesis but also for the initiation of all mRNA translation through initiator tRNA(fMet) aminoacylation. The protein is Methionine--tRNA ligase of Shewanella baltica (strain OS155 / ATCC BAA-1091).